The primary structure comprises 141 residues: Putative pre-16S rRNA nuclease (141 aa).

The protein belongs to the YqgF nuclease family.

The protein resides in the cytoplasm. In terms of biological role, could be a nuclease involved in processing of the 5'-end of pre-16S rRNA. The sequence is that of Putative pre-16S rRNA nuclease from Clostridioides difficile (strain 630) (Peptoclostridium difficile).